A 95-amino-acid polypeptide reads, in one-letter code: Aspartyl/glutamyl-tRNA(Asn/Gln) amidotransferase subunit C (95 aa).

It belongs to the GatC family. As to quaternary structure, heterotrimer of A, B and C subunits.

It catalyses the reaction L-glutamyl-tRNA(Gln) + L-glutamine + ATP + H2O = L-glutaminyl-tRNA(Gln) + L-glutamate + ADP + phosphate + H(+). The enzyme catalyses L-aspartyl-tRNA(Asn) + L-glutamine + ATP + H2O = L-asparaginyl-tRNA(Asn) + L-glutamate + ADP + phosphate + 2 H(+). Its function is as follows. Allows the formation of correctly charged Asn-tRNA(Asn) or Gln-tRNA(Gln) through the transamidation of misacylated Asp-tRNA(Asn) or Glu-tRNA(Gln) in organisms which lack either or both of asparaginyl-tRNA or glutaminyl-tRNA synthetases. The reaction takes place in the presence of glutamine and ATP through an activated phospho-Asp-tRNA(Asn) or phospho-Glu-tRNA(Gln). In Nitratidesulfovibrio vulgaris (strain DSM 19637 / Miyazaki F) (Desulfovibrio vulgaris), this protein is Aspartyl/glutamyl-tRNA(Asn/Gln) amidotransferase subunit C.